The following is a 535-amino-acid chain: Peroxisomal membrane protein PEX29 (535 aa).

Helical transmembrane passes span 139–159 and 176–196; these read LSVP…SKPL and ILLL…PAYM. Asn239 carries N-linked (GlcNAc...) asparagine glycosylation. Residues 247–267 form a helical membrane-spanning segment; sequence MLLYVMSYDFVTSLIVKYLYF. N-linked (GlcNAc...) asparagine glycosylation is present at Asn271. A run of 2 helical transmembrane segments spans residues 272-292 and 297-317; these read ITIF…LFGA and AMLP…TIAM. N-linked (GlcNAc...) asparagine glycans are attached at residues Asn450 and Asn515. The tract at residues 511–535 is disordered; that stretch reads AHRRNKSMESSNSLHPVKSIDSVDG.

It belongs to the PEX28-32 family. PEX29 subfamily.

Its subcellular location is the endoplasmic reticulum membrane. In terms of biological role, with PEX23, contributes to the formation of endoplasmic reticulum-mitochondria junctions which are important for mitochondrial function. Involved in lipid dropplets formation. The chain is Peroxisomal membrane protein PEX29 from Ogataea parapolymorpha (strain ATCC 26012 / BCRC 20466 / JCM 22074 / NRRL Y-7560 / DL-1) (Yeast).